A 478-amino-acid chain; its full sequence is Violaxanthin de-epoxidase, chloroplastic (478 aa).

The stretch at 388–453 (LVERLEKKVE…RELSKEEMDV (66 aa)) forms a coiled coil.

The protein belongs to the calycin superfamily. Lipocalin family.

The protein resides in the plastid. It localises to the chloroplast thylakoid membrane. It carries out the reaction all-trans-violaxanthin + 2 L-ascorbate = all-trans-zeaxanthin + 2 L-dehydroascorbate + 2 H2O. Functionally, part of the xanthophyll (or violaxanthin) cycle for controlling the concentration of zeaxanthin in chloroplasts. Catalyzes the two-step mono de-epoxidation reaction. Stereospecific for all-trans xanthophylls. Zeaxanthin induces the dissipation of excitation energy in the chlorophyll of the light-harvesting protein complex of photosystem II. The sequence is that of Violaxanthin de-epoxidase, chloroplastic (VDE1) from Nicotiana tabacum (Common tobacco).